A 750-amino-acid chain; its full sequence is Photosystem I P700 chlorophyll a apoprotein A1 (750 aa).

Helical transmembrane passes span 70 to 93, 156 to 179, 195 to 219, 291 to 309, 346 to 369, 385 to 411, 433 to 455, and 531 to 549; these read VFSA…FHGA, LYCT…FHYH, LNHH…HVSL, IAHH…GHMY, WHAQ…HHMY, LSLF…IFMV, AIIS…LYIH, and FLVH…LILL. Positions 573 and 582 each coordinate [4Fe-4S] cluster. 2 consecutive transmembrane segments (helical) span residues 589-610 and 664-686; these read HVFL…HFSW and LSAY…MFLF. His675 serves as a coordination point for chlorophyll a'. Chlorophyll a is bound by residues Met683 and Tyr691. Trp692 serves as a coordination point for phylloquinone. A helical transmembrane segment spans residues 724 to 744; sequence AVGVTHYLLGGIATTWAFFLA.

The protein belongs to the PsaA/PsaB family. The PsaA/B heterodimer binds the P700 chlorophyll special pair and subsequent electron acceptors. PSI consists of a core antenna complex that captures photons, and an electron transfer chain that converts photonic excitation into a charge separation. The eukaryotic PSI reaction center is composed of at least 11 subunits. The cofactor is P700 is a chlorophyll a/chlorophyll a' dimer, A0 is one or more chlorophyll a, A1 is one or both phylloquinones and FX is a shared 4Fe-4S iron-sulfur center..

The protein resides in the plastid. It localises to the chloroplast thylakoid membrane. It carries out the reaction reduced [plastocyanin] + hnu + oxidized [2Fe-2S]-[ferredoxin] = oxidized [plastocyanin] + reduced [2Fe-2S]-[ferredoxin]. In terms of biological role, psaA and PsaB bind P700, the primary electron donor of photosystem I (PSI), as well as the electron acceptors A0, A1 and FX. PSI is a plastocyanin-ferredoxin oxidoreductase, converting photonic excitation into a charge separation, which transfers an electron from the donor P700 chlorophyll pair to the spectroscopically characterized acceptors A0, A1, FX, FA and FB in turn. Oxidized P700 is reduced on the lumenal side of the thylakoid membrane by plastocyanin. This Atropa belladonna (Belladonna) protein is Photosystem I P700 chlorophyll a apoprotein A1.